A 61-amino-acid polypeptide reads, in one-letter code: uncharacterized protein (61 aa).

The disordered stretch occupies residues 36–61 (RLTDVPPQPNSPPDNVFNPDQPRMGP).

It belongs to the ART2/RRT15 family.

This is an uncharacterized protein from Saccharomyces cerevisiae (strain ATCC 204508 / S288c) (Baker's yeast).